The sequence spans 203 residues: Hypoxanthine-guanine phosphoribosyltransferase (203 aa).

Residues K66 and G67 each contribute to the diphosphate site. Mg(2+) contacts are provided by E122 and D123. Residue D126 is the Proton acceptor of the active site. Residues K154, F175–V176, and D182 each bind GMP. Diphosphate is bound at residue R188.

It belongs to the purine/pyrimidine phosphoribosyltransferase family. Mg(2+) is required as a cofactor.

It is found in the cytoplasm. The enzyme catalyses IMP + diphosphate = hypoxanthine + 5-phospho-alpha-D-ribose 1-diphosphate. It carries out the reaction GMP + diphosphate = guanine + 5-phospho-alpha-D-ribose 1-diphosphate. It functions in the pathway purine metabolism; IMP biosynthesis via salvage pathway; IMP from hypoxanthine: step 1/1. It participates in purine metabolism; GMP biosynthesis via salvage pathway; GMP from guanine: step 1/1. Functionally, purine salvage pathway enzyme that catalyzes the transfer of the ribosyl-5-phosphate group from 5-phospho-alpha-D-ribose 1-diphosphate (PRPP) to the N9 position of the 6-oxopurines hypoxanthine and guanine to form the corresponding ribonucleotides IMP (inosine 5'-monophosphate) and GMP (guanosine 5'-monophosphate), with the release of PPi. This chain is Hypoxanthine-guanine phosphoribosyltransferase (hpt), found in Mycobacterium avium.